The sequence spans 415 residues: Putative F-box protein At5g40050 (415 aa).

The 47-residue stretch at I13–S59 folds into the F-box domain.

The chain is Putative F-box protein At5g40050 from Arabidopsis thaliana (Mouse-ear cress).